Reading from the N-terminus, the 239-residue chain is MADS-box transcription factor 34 (239 aa).

One can recognise an MADS-box domain in the interval 1–61; that stretch reads MGRGKVVLQR…GRLYQFSSSS (61 aa). Positions 88–178 constitute a K-box domain; it reads MQNNYQEYVN…KRKLDEIDVE (91 aa). Residues 179 to 208 are disordered; it reads AAPPQPPWNGNCSNGHGGGGGVFSSEPPQP.

Highly expressed in leaves and at low levels in roots and spikelets (rice flower).

It localises to the nucleus. Probable transcription factor. In Oryza sativa subsp. japonica (Rice), this protein is MADS-box transcription factor 34 (MADS34).